The chain runs to 1125 residues: tRNA (34-2'-O)-methyltransferase regulator WDR6 (1125 aa).

N-acetylmethionine is present on Met-1. WD repeat units follow at residues 89 to 130 (SKGL…GNVA), 155 to 197 (TDRC…PDNK), 207 to 246 (GHVGVIFSMSYLESKGLLATASEDRSVRIWKVGDLRVPGG), 256 to 294 (GHSARVWQVKLLENYLISAGEDCVCLVWSHEGEILQAFR), 295 to 335 (GHQG…YPGL), 346 to 384 (SRPGALKAVTLAGSWRVLAVTDVGGLYLYDLEVKCWEQL), 433 to 475 (LFQG…TGKA), 489 to 528 (SKQRWHTCSAFLPPGDFLVCGDRRGSVLLFPARPCLFKKP), 567 to 605 (HGKQGVTSVTCHGGYVYSTGRDGSYYQLFVHGGRLQPVL), 611 to 650 (RGMNWIAGLRMAPDGSMVVLGFHANEFVVWSPRSHEKLHI), 652 to 692 (NCGG…IRPN), 725 to 765 (EHPD…GAAH), 767 to 798 (LTAVCNHISSVRALAVWGVGTPGGPQDSHPGL), 860 to 905 (TRYM…RILH), 912 to 958 (HHKR…DRGS), 982 to 1024 (AHSC…PELE), and 1047 to 1085 (AHAAHVTGIKILSPKLMVSASIDQRLTFWRLGNGEPTFM).

This sequence belongs to the WD repeat WDR6 family. As to quaternary structure, interacts with FTSJ1; the interaction is direct, and required for 2'-O-methylation of position 34 in substrate tRNAs. Interacts with IRS4. Interacts with STK11/LKB1. As to expression, expressed in hypothalamus, hippocampus, cerebrum cortex and cerebellum.

The protein resides in the cytoplasm. Its function is as follows. Together with methyltransferase FTSJ1, methylates the 2'-O-ribose of nucleotides at position 34 of the tRNA anticodon loop of substrate tRNAs. Required for the correct positioning of the substrate tRNA for methylation. Required to suppress amino acid starvation-induced autophagy. Enhances the STK11/LKB1-induced cell growth suppression activity. This Rattus norvegicus (Rat) protein is tRNA (34-2'-O)-methyltransferase regulator WDR6 (Wdr6).